The following is a 720-amino-acid chain: MNSIKSHILRSSKRYISASSKRLAEVEVTVDGRKVSIEAGSSIIQAAELAGVTIPRYCYHDKLAIAGNCRMCLVDVERMPKLIASCAMPVQNGMVVHTDSERIKKAREGVTEMLLENHPLDCPVCDQGGECDLQEQSQRYGSDRGRFHEVVGKRAVENKAIGPLVKTSMNRCIHCTRCVRFMNDVAGAPEFGTAGRGNDMQIGTYIERNINSEMSGNIIDLCPVGALTSKPYAFRARPWELKRTETIDVLDAVGSNIRVDTRGIEVMRVLPRLNDDVNEEWISDKTRFACDGLKTQRLTTPLIRNGDKFETATWDEALSTIAAAYSKINPQNGELKAIAGALVDAESLVSLKDLVNKLGSENVTTDVKQSVNAHGFDIRSNYIFNSTIDGIEDADQILLVGTNPRFEAAVLNTRIRKVWLRSNLEISSVGQDFNSTFDVTNLGEDAKALESALQGSVGEKLGQAKKPLIIVGSGVAESKDSEAIYKLVGEFASKHENFNSGEWNGVNLLHREASRVAALDLGFNTLVEDSTKAKFIYLLGADEITNKDIPKDAFVVYQGHHGDLGASFADVILPGSAYTEKSGTYVNTEGRVQATRAATNPPGVAREDWKIIRALSEYLNAKLPYDDIYSVRLRLGEIAPHLVRHDVIEPVSQEIAKIGFNDLVNKNKSATIFEEPLKNPIDNFYFTDVISRSSPTMAKCISTFGAKIEKVKDEKPDINF.

A mitochondrion-targeting transit peptide spans 1 to 23 (MNSIKSHILRSSKRYISASSKRL). A 2Fe-2S ferredoxin-type domain is found at 24 to 102 (AEVEVTVDGR…GMVVHTDSER (79 aa)). Positions 58, 69, 72, and 86 each coordinate [2Fe-2S] cluster. Residues 102–141 (RIKKAREGVTEMLLENHPLDCPVCDQGGECDLQEQSQRYG) enclose the 4Fe-4S His(Cys)3-ligated-type domain. The region spanning 241 to 297 (LKRTETIDVLDAVGSNIRVDTRGIEVMRVLPRLNDDVNEEWISDKTRFACDGLKTQR) is the 4Fe-4S Mo/W bis-MGD-type domain.

It belongs to the complex I 75 kDa subunit family. Core subunit of respiratory chain NADH dehydrogenase (Complex I) which is composed of 45 different subunits. This is the largest subunit of complex I and it is a component of the iron-sulfur (IP) fragment of the enzyme. [2Fe-2S] cluster serves as cofactor. [4Fe-4S] cluster is required as a cofactor.

It localises to the mitochondrion. It catalyses the reaction a ubiquinone + NADH + 5 H(+)(in) = a ubiquinol + NAD(+) + 4 H(+)(out). Core subunit of the mitochondrial membrane respiratory chain NADH dehydrogenase (Complex I) which catalyzes electron transfer from NADH through the respiratory chain, using ubiquinone as an electron acceptor. Essential for catalysing the entry and efficient transfer of electrons within complex I. Plays a key role in the assembly and stability of complex I and participates in the association of complex I with ubiquinol-cytochrome reductase complex (Complex III) to form supercomplexes. Plays a role in cell wall integrity and is involved in osmotic and oxidative resistance, yeast to hypha transition, and the ability to damage and invade oral epithelial cells. The chain is NADH-ubiquinone oxidoreductase 78 kDa subunit, mitochondrial from Candida albicans (strain SC5314 / ATCC MYA-2876) (Yeast).